The following is a 316-amino-acid chain: Olfactory receptor 4N4C (316 aa).

Residues 1–26 lie on the Cytoplasmic side of the membrane; it reads MKIANNTVVTEFILLGLTQSQDIQLL. The chain crosses the membrane as a helical span at residues 27–47; sequence VFVLILIFYLIILPGNFLIIF. The Extracellular portion of the chain corresponds to 48 to 56; the sequence is TIRSDPGLT. A helical membrane pass occupies residues 57-77; it reads APLYLFLGNLAFLDASYSFIV. At 78-99 the chain is on the cytoplasmic side; it reads APRMLVDFLSEKKVISYRGCIT. Cys97 and Cys179 are disulfide-bonded. Residues 100–120 traverse the membrane as a helical segment; that stretch reads QLFFLHFLGGGEGLLLVVMAF. The Extracellular portion of the chain corresponds to 121–143; it reads DRYIAICRPLHCSTVMNPRACYA. The chain crosses the membrane as a helical span at residues 144–164; the sequence is MMLALWLGGFVHSIIQVVLIL. At 165-204 the chain is on the cytoplasmic side; it reads RLPFCGPNQLDNFFCDVRQVIKLACTDMFVVELLMVFNSG. Residues 205 to 225 form a helical membrane-spanning segment; it reads LMTLLCFLGLLASYAVILCHV. At 226–243 the chain is on the extracellular side; sequence RRAASEGKNKAMSTCTTR. A helical transmembrane segment spans residues 244-264; sequence VIIILLMFGPAIFIYICPFRA. Residues 265-268 are Cytoplasmic-facing; sequence LPAD. Residues 269 to 289 traverse the membrane as a helical segment; it reads KMVSLFHTVIFPLMNPMIYTL. Topologically, residues 290-316 are extracellular; that stretch reads RNQEVKTSMKRLLSRHVVCQVDFIIRN.

Belongs to the G-protein coupled receptor 1 family.

It localises to the membrane. In terms of biological role, odorant receptor. The protein is Olfactory receptor 4N4C of Homo sapiens (Human).